The following is a 475-amino-acid chain: Ribulose bisphosphate carboxylase large chain (475 aa).

Residues 1–2 (MS) constitute a propeptide that is removed on maturation. P3 carries the post-translational modification N-acetylproline. The residue at position 14 (K14) is an N6,N6,N6-trimethyllysine. Positions 123 and 173 each coordinate substrate. The active-site Proton acceptor is K175. Residue K177 participates in substrate binding. Mg(2+)-binding residues include K201, D203, and E204. Position 201 is an N6-carboxylysine (K201). H294 functions as the Proton acceptor in the catalytic mechanism. The substrate site is built by R295, H327, and S379.

Belongs to the RuBisCO large chain family. Type I subfamily. Heterohexadecamer of 8 large chains and 8 small chains; disulfide-linked. The disulfide link is formed within the large subunit homodimers. It depends on Mg(2+) as a cofactor. The disulfide bond which can form in the large chain dimeric partners within the hexadecamer appears to be associated with oxidative stress and protein turnover.

The protein resides in the plastid. It is found in the chloroplast. The enzyme catalyses 2 (2R)-3-phosphoglycerate + 2 H(+) = D-ribulose 1,5-bisphosphate + CO2 + H2O. It carries out the reaction D-ribulose 1,5-bisphosphate + O2 = 2-phosphoglycolate + (2R)-3-phosphoglycerate + 2 H(+). In terms of biological role, ruBisCO catalyzes two reactions: the carboxylation of D-ribulose 1,5-bisphosphate, the primary event in carbon dioxide fixation, as well as the oxidative fragmentation of the pentose substrate in the photorespiration process. Both reactions occur simultaneously and in competition at the same active site. The sequence is that of Ribulose bisphosphate carboxylase large chain from Amaranthus tricolor (Joseph's coat).